The following is a 136-amino-acid chain: Histone H3.3 (136 aa).

The disordered stretch occupies residues 1–45 (MARTKQTARKSTGGKAPRKQLASKAARKAAPATGGVKKPHRYRPP). The residue at position 5 (lysine 5) is an N6,N6,N6-trimethyllysine; alternate. Lysine 5 is modified (N6,N6-dimethyllysine; alternate). Residues lysine 5 and lysine 10 each carry the N6-methyllysine; alternate modification. Residue lysine 10 is modified to N6-acetyllysine; alternate. The residue at position 11 (serine 11) is a Phosphoserine. Position 15 is an N6,N6-dimethyllysine; alternate (lysine 15). 5 positions are modified to N6-acetyllysine; alternate: lysine 15, lysine 19, lysine 24, lysine 28, and lysine 37. Lysine 19, lysine 24, lysine 28, and lysine 37 each carry N6-methyllysine; alternate. Low complexity predominate over residues 19-32 (KQLASKAARKAAPA). Residues lysine 28 and lysine 37 each carry the N6,N6,N6-trimethyllysine; alternate modification. 2 positions are modified to N6,N6-dimethyllysine; alternate: lysine 28 and lysine 37. Residues lysine 57 and lysine 65 each carry the N6-acetyllysine modification. Lysine 80 is subject to N6,N6,N6-trimethyllysine; alternate. Lysine 80 carries the post-translational modification N6,N6-dimethyllysine; alternate. At lysine 80 the chain carries N6-methyllysine; alternate. The residue at position 123 (lysine 123) is an N6-acetyllysine.

The protein belongs to the histone H3 family. The nucleosome is a histone octamer containing two molecules each of H2A, H2B, H3 and H4 assembled in one H3-H4 heterotetramer and two H2A-H2B heterodimers. The octamer wraps approximately 147 bp of DNA. In terms of processing, phosphorylated by ark1 to form H3S10ph in a cell cycle-dependent manner during mitosis and meiosis. H3S10ph is also formed by ssp2, promotes subsequent H3K14ac formation by gcn5, and is required for transcriptional activation through TBP recruitment to the promoters. Dephosphorylation is performed by sds21. Post-translationally, mono-, di- and trimethylated by the COMPASS complex to form H3K4me1/2/3. H3K4me activates gene expression by regulating transcription elongation and plays a role in telomere length maintenance. H3K4me enrichment correlates with transcription levels, and occurs in a 5' to 3' gradient with H3K4me3 enrichment at the 5'-end of genes, shifting to H3K4me2 and then H3K4me1. Methylated by clr4 to form H3K9me1. H3K9me1 represents a specific tag for epigenetic transcriptional repression by recruiting swi6/HP1 to methylated histones. Targeting to histone probably involves clr3 and rik1. Essential for silencing of centromeres and directional switching of the mating type. Methylated by set2 to form H3K36me. H3K36me represses gene expression. Methylated by dot1 to form H3K79me. H3K79me is required for association of SIR proteins with telomeric regions and for telomeric silencing. The COMPASS-mediated formation of H3K4me2/3 and the dot1-mediated formation of H3K79me require H2BK123ub1. Acetylation of histone H3 leads to transcriptional activation. H3K14ac formation by gcn5 is promoted by H3S10ph. H3K14ac can also be formed by esa1. H3K56ac formation occurs predominantly in newly synthesized H3 molecules during G1, S and G2/M of the cell cycle and may be involved in DNA repair. Acetylation at Lys-123 (H3K122ac) plays a central role in chromatin structure: localizes at the surface of the histone octamer and stimulates transcription, possibly by promoting nucleosome instability.

It is found in the nucleus. It localises to the chromosome. Functionally, core component of nucleosome. Nucleosomes wrap and compact DNA into chromatin, limiting DNA accessibility to the cellular machineries which require DNA as a template. Histones thereby play a central role in transcription regulation, DNA repair, DNA replication and chromosomal stability. DNA accessibility is regulated via a complex set of post-translational modifications of histones, also called histone code, and nucleosome remodeling. In Schizosaccharomyces pombe (strain 972 / ATCC 24843) (Fission yeast), this protein is Histone H3.3 (hht3).